We begin with the raw amino-acid sequence, 921 residues long: Glutamate receptor 3.7 (921 aa).

The signal sequence occupies residues 1 to 25 (MGLGIDPSVAITALIVVILVVPMDC). The Extracellular portion of the chain corresponds to 26–580 (QRPQLVNIGA…WIFLRPFTSR (555 aa)). 7 N-linked (GlcNAc...) asparagine glycosylation sites follow: N214, N300, N330, N369, N396, N478, and N568. The chain crosses the membrane as a helical span at residues 581–601 (LWCVVLVSFLVIAVVIWILEH). Residues 602–608 (RINEDFR) lie on the Cytoplasmic side of the membrane. Residues 609 to 629 (GPPRRQLSTMLLFSFSTLFKR) form a helical membrane-spanning segment. The Cytoplasmic portion of the chain corresponds to 630–640 (NQEDTISNLAR). A helical membrane pass occupies residues 641-661 (LVMIVWLFLLMVLTASYTANL). The Extracellular segment spans residues 662–822 (TSILTVQQLP…PEPNQLHLKS (161 aa)). Residues 823 to 843 (FKGLYLVCIAITVSAFLVFVL) form a helical membrane-spanning segment. Residues 844–921 (RMIRQFVRYR…VQADTEVPRN (78 aa)) are Cytoplasmic-facing. Residues 896–921 (FRRSDDSNNNPSHVGEVQADTEVPRN) are disordered.

This sequence belongs to the glutamate-gated ion channel (TC 1.A.10.1) family. May form heteromers. In terms of tissue distribution, expressed predominantly in leaves and siliques. Also detected in roots.

It is found in the membrane. Functionally, glutamate-gated receptor that probably acts as a non-selective cation channel. May be involved in light-signal transduction and calcium homeostasis via the regulation of calcium influx into cells. The sequence is that of Glutamate receptor 3.7 (GLR3.7) from Arabidopsis thaliana (Mouse-ear cress).